The primary structure comprises 28 residues: Ranatuerin-2AVb (28 aa).

Cys23 and Cys28 are disulfide-bonded.

As to expression, expressed by the skin glands.

Its subcellular location is the secreted. In terms of biological role, has antibacterial activity. This chain is Ranatuerin-2AVb, found in Rana arvalis (Moor frog).